The sequence spans 97 residues: Co-chaperonin GroES (97 aa).

The protein belongs to the GroES chaperonin family. As to quaternary structure, heptamer of 7 subunits arranged in a ring. Interacts with the chaperonin GroEL.

The protein localises to the cytoplasm. Its function is as follows. Together with the chaperonin GroEL, plays an essential role in assisting protein folding. The GroEL-GroES system forms a nano-cage that allows encapsulation of the non-native substrate proteins and provides a physical environment optimized to promote and accelerate protein folding. GroES binds to the apical surface of the GroEL ring, thereby capping the opening of the GroEL channel. The chain is Co-chaperonin GroES from Blochmanniella pennsylvanica (strain BPEN).